Here is a 319-residue protein sequence, read N- to C-terminus: MDLLFLGTSAGVPTKARNVSATAVIETNGSHWYLVDCGEGTQHRLLHTPLSIRDLRAIFITHVHGDHCFGLPGLLASAGMSGRTQPLELILPVALHDWVRQGLVASDTFLPFELRLLAVEELAEWRNEALQVTTVQLSHRVPSVGFVFTELNPEPRLDTQRLQAEGIPRGPLWGELAKGLTVQHDGQLLDGHDYLRPSRPPRRVIVCGDNDNPELLADVAKGADVLVHEATFTQAVVERTGVTFGHSTAAAVARFAEGAGVRNLVLTHFSARYQSDPRRSPNIDNVRDEALAHYSGQLTLAQDLQRYHLGRDGCLEPVG.

Residues His-62, His-64, Asp-66, His-67, His-139, Asp-209, and His-268 each contribute to the Zn(2+) site. Asp-66 functions as the Proton acceptor in the catalytic mechanism.

This sequence belongs to the RNase Z family. As to quaternary structure, homodimer. The cofactor is Zn(2+).

It carries out the reaction Endonucleolytic cleavage of RNA, removing extra 3' nucleotides from tRNA precursor, generating 3' termini of tRNAs. A 3'-hydroxy group is left at the tRNA terminus and a 5'-phosphoryl group is left at the trailer molecule.. In terms of biological role, zinc phosphodiesterase, which displays some tRNA 3'-processing endonuclease activity. Probably involved in tRNA maturation, by removing a 3'-trailer from precursor tRNA. The sequence is that of Ribonuclease Z from Pseudomonas putida (strain GB-1).